The primary structure comprises 336 residues: Glyceraldehyde-3-phosphate dehydrogenase, plasmid (336 aa).

Residues R12–I13, D37, R81, and S123 contribute to the NAD(+) site. D-glyceraldehyde 3-phosphate-binding positions include S154–T156 and T185. C155 functions as the Nucleophile in the catalytic mechanism. Position 186 (N186) interacts with NAD(+). D-glyceraldehyde 3-phosphate contacts are provided by residues R200, T213–G214, and R236. Residue N317 coordinates NAD(+).

It belongs to the glyceraldehyde-3-phosphate dehydrogenase family. Homotetramer.

The catalysed reaction is D-glyceraldehyde 3-phosphate + phosphate + NAD(+) = (2R)-3-phospho-glyceroyl phosphate + NADH + H(+). It participates in carbohydrate biosynthesis; Calvin cycle. In terms of biological role, could be involved in carbon fixation as a component of the Calvin cycle. Catalyzes the oxidative phosphorylation of glyceraldehyde 3-phosphate (G3P) to 1,3-bisphosphoglycerate (BPG) using the cofactor NAD. The first reaction step involves the formation of a hemiacetal intermediate between G3P and a cysteine residue, and this hemiacetal intermediate is then oxidized to a thioester, with concomitant reduction of NAD to NADH. The reduced NADH is then exchanged with the second NAD, and the thioester is attacked by a nucleophilic inorganic phosphate to produce BPG. The chain is Glyceraldehyde-3-phosphate dehydrogenase, plasmid (cbbGP) from Cupriavidus necator (strain ATCC 17699 / DSM 428 / KCTC 22496 / NCIMB 10442 / H16 / Stanier 337) (Ralstonia eutropha).